The sequence spans 728 residues: MDNPTDSAGKCPVAHGNTPRSRSNRDWWPDQLNVQILHHNSGRADPLGQAFDYAEEFKKLHLHGLKKDLHALMTDSQDWWPADFGHYGGLFIRMAWHSAGTYRITDGRGGAGQGQQRFAPLNSWPDNANLDKARRLLWPIKQKYGNRISWADLLILTGNVALESMGFKTFGFAGGRADVWEPEELFWGPEGTWLGDERYSGERELAEPLGAVQMGFIYVNPEGPNGNSDPLASARDIRETFARMAMNDEETVALIAGGHTFGKKHGAGEPFLIGPEPEGGAIEDQGLGWKSSFGTGVGKDAITAGLEVTWSQTPTKWSNYFFENLFAFEWELTTSPAGAKQWQAKNAEASIPDAYDASKRHLPTMLTSDLALRFDPTYEKISRHFLENPGEFADAFARAWFKLTHRDMGPKVRYLGPEVPAEDLIWQDVIPAVDHPLVDDKDIAELKEKVLATGLTVQELVSTAWASASTFRGSDKRGGANGARVRLAPQKDWDANQPAQLAKVLGVLESIQKDFNAAQTGAKKISLADLIVLAGAAGVEKAAAAGGNAVSVPFTPGRIDASEAQTDAHSFAALEPRIDGFRNYLNGKRHQFMKPEEALVDRAQLLTLTGPEMTALVGGLRVLKAGAPEHGVFTSRPETLTNDFFVNLLDMGTQWVPVAGKEGFYEGRDRKTGAAKWTGTRVDLIFGSHSQLRAFAEVYGQADAKGKFVNDFVAAWNKVMNADRFDLV.

The signal sequence occupies residues 1–16 (MDNPTDSAGKCPVAHG). Residues 1-26 (MDNPTDSAGKCPVAHGNTPRSRSNRD) form a disordered region. The segment at residues 96–218 (WHSAGTYRIT…LGAVQMGFIY (123 aa)) is a cross-link (tryptophyl-tyrosyl-methioninium (Trp-Tyr) (with M-244)). His97 functions as the Proton acceptor in the catalytic mechanism. The tryptophyl-tyrosyl-methioninium (Tyr-Met) (with W-96) cross-link spans 218 to 244 (YVNPEGPNGNSDPLASARDIRETFARM). His259 serves as a coordination point for heme b.

It belongs to the peroxidase family. Peroxidase/catalase subfamily. In terms of assembly, homodimer or homotetramer. It depends on heme b as a cofactor. Formation of the three residue Trp-Tyr-Met cross-link is important for the catalase, but not the peroxidase activity of the enzyme.

The catalysed reaction is H2O2 + AH2 = A + 2 H2O. It carries out the reaction 2 H2O2 = O2 + 2 H2O. In terms of biological role, bifunctional enzyme with both catalase and broad-spectrum peroxidase activity. This is Catalase-peroxidase from Rhizobium leguminosarum bv. phaseoli.